A 579-amino-acid polypeptide reads, in one-letter code: MKFVLVSGGVVSGVGKGIIASSCGLLLKTLGLKVTAIKIDPYINVDAGTMNPKEHGECFVLHDGGETDLDLGNYERYLGVDLARDNNITTGKVYQQVIENERKGKYLGRTVQVVPHVIDAIIDTINRVSRVPVDKSGEEPDVCIIELGGTVGDIESMPFVEALTQLRHRAGKNNFINIHVSYVPVVNGEQKTKPTQHAVKSVRSAGLIPDLIACRCEKPLEQGTINKVASSCQVEVNQVLAVRDMPTIYQVPLLLEEQGLLRELKETLKLDDVKLSPARVSQGQEVWAKWQKIVPLGYAETVDIVLVGKYVELHDAYLSVIKALEHSAMRCGRKLNLIWVDSEHLEEKTQKEDPTKYHKAWHDVCVAKGILVPGGFGHRGTEGMIRAAQWAREQKTPFLGVCLGMQVAVIEAARNLCELKDATSEEFDANAEHRVIIFMPEGSKEKLGGTMRLGTRSTHFQPGSEFSKLRALYGEATTIEERHRHRYEVNPDYIEKLEQSGLIFIGKDDSGERMEVVEIKDHPYYVGVQYHPEYTSRVLDPSRPFLGFVAAAIGCLDQITKEILQDAGFANGSINGAHF.

The Glutamine amidotransferase type-1 domain occupies tyrosine 310–glutamine 558. Catalysis depends on for GATase activity residues cysteine 402, histidine 531, and glutamate 533.

It belongs to the CTP synthase family.

It catalyses the reaction UTP + L-glutamine + ATP + H2O = CTP + L-glutamate + ADP + phosphate + 2 H(+). It functions in the pathway pyrimidine metabolism; CTP biosynthesis via de novo pathway; CTP from UDP: step 2/2. In terms of biological role, catalyzes the ATP-dependent amination of UTP to CTP with either L-glutamine or ammonia as the source of nitrogen. The sequence is that of CTP synthase (pyr-7) from Neurospora crassa (strain ATCC 24698 / 74-OR23-1A / CBS 708.71 / DSM 1257 / FGSC 987).